Consider the following 331-residue polypeptide: MIDTSIPLVDLHRHLDGNVRVNTIWELGHQHGIALPADSLETLAPFVQIQGKETSLVAFLKKLDWMVGVLADLDAVKRVAYENVADAALSGLDYAELRFSPYYMAMNHKLPIEGVVEAVVDGVKAGLKDYNVKINLIGILSRSFGQAACTQELEGLLAHKQHLVAMDLAGDEMGFPGELFNDHFKRVRDADLAITAHAGEAAGSQSMWQAIQELGATRIGHGVNAIHDPKLMEYLAKHRIGIESCPTSNLHTSTVASYAEHPFRTFMDAGVLINLNTDDPGVSAIDINHEYRIAKAELKLTDAELAQVQRNGVEMAFLSDSDRKALYAAKV.

2 residues coordinate Zn(2+): histidine 12 and histidine 14. Substrate is bound by residues histidine 14, aspartate 16, and glycine 170. Histidine 197 serves as a coordination point for Zn(2+). Glutamate 200 (proton donor) is an active-site residue. A Zn(2+)-binding site is contributed by aspartate 278. Aspartate 279 contributes to the substrate binding site.

It belongs to the metallo-dependent hydrolases superfamily. Adenosine and AMP deaminases family. Adenosine deaminase subfamily. The cofactor is Zn(2+).

The enzyme catalyses adenosine + H2O + H(+) = inosine + NH4(+). The catalysed reaction is 2'-deoxyadenosine + H2O + H(+) = 2'-deoxyinosine + NH4(+). Its function is as follows. Catalyzes the hydrolytic deamination of adenosine and 2-deoxyadenosine. This chain is Adenosine deaminase, found in Shewanella baltica (strain OS223).